The sequence spans 77 residues: Small ribosomal subunit protein bS20 (77 aa).

The protein belongs to the bacterial ribosomal protein bS20 family.

Its function is as follows. Binds directly to 16S ribosomal RNA. The chain is Small ribosomal subunit protein bS20 from Lactococcus lactis subsp. lactis (strain IL1403) (Streptococcus lactis).